The following is a 91-amino-acid chain: Non-hemolytic enterotoxin 105 kDa component (91 aa).

The cofactor is Zn(2+).

The protein resides in the secreted. Functionally, this protein is a metalloprotease with gelatinolytic and collagenolytic activity and is a component of the non-hemolytic enterotoxin complex (NHE). The sequence is that of Non-hemolytic enterotoxin 105 kDa component from Bacillus cereus.